Here is a 328-residue protein sequence, read N- to C-terminus: L-lactate dehydrogenase (328 aa).

NAD(+)-binding positions include Val-18, Glu-39, Lys-46, Tyr-71, and 85-86 (GA). Residues Gln-88 and Arg-94 each contribute to the substrate site. NAD(+)-binding positions include Ser-107, 124 to 126 (AAN), and Ser-149. 126 to 129 (NPVD) is a binding site for substrate. Substrate is bound at residue 154–157 (DTAR). The beta-D-fructose 1,6-bisphosphate site is built by Arg-159 and His-174. His-181 (proton acceptor) is an active-site residue. Position 226 is a phosphotyrosine (Tyr-226). Thr-235 contributes to the substrate binding site.

Belongs to the LDH/MDH superfamily. LDH family. Homotetramer.

It is found in the cytoplasm. It catalyses the reaction (S)-lactate + NAD(+) = pyruvate + NADH + H(+). The protein operates within fermentation; pyruvate fermentation to lactate; (S)-lactate from pyruvate: step 1/1. Allosterically activated by fructose 1,6-bisphosphate (FBP). Catalyzes the conversion of lactate to pyruvate. In Streptococcus mutans serotype c (strain ATCC 700610 / UA159), this protein is L-lactate dehydrogenase.